The primary structure comprises 501 residues: Betaine aldehyde dehydrogenase, chloroplastic (501 aa).

A chloroplast-targeting transit peptide spans 1-7 (MAIRVPS). 238 to 243 (GSTATG) contributes to the NAD(+) binding site. E260 functions as the Proton acceptor in the catalytic mechanism. The active-site Nucleophile is the C294.

It belongs to the aldehyde dehydrogenase family. As to quaternary structure, homodimer.

Its subcellular location is the plastid. The protein localises to the chloroplast. It carries out the reaction betaine aldehyde + NAD(+) + H2O = glycine betaine + NADH + 2 H(+). Its pathway is amine and polyamine biosynthesis; betaine biosynthesis via choline pathway; betaine from betaine aldehyde: step 1/1. The chain is Betaine aldehyde dehydrogenase, chloroplastic (BADH4) from Amaranthus hypochondriacus (Prince-of-Wales feather).